We begin with the raw amino-acid sequence, 547 residues long: Riboflavin transporter RibJ (547 aa).

Residues 1 to 11 (MLPSFTRKPAD) lie on the Cytoplasmic side of the membrane. The helical transmembrane segment at 12–32 (HPIGYLVALSGLLMQLMSYGI) threads the bilayer. Over 33–58 (DNSYSIFSEDMHNDPSLGFPSITAIS) the chain is Extracellular. A helical transmembrane segment spans residues 59–79 (LGNSVSLGLSPAFGVLAGFCV). The Cytoplasmic segment spans residues 80–85 (DRLPPR). The chain crosses the membrane as a helical span at residues 86–106 (FMMALSTILLFTGLWISSTLA). Residues 107–108 (AN) lie on the Extracellular side of the membrane. A helical transmembrane segment spans residues 109-129 (IYVVTFTYCLFASIGTACMLS). The Cytoplasmic segment spans residues 130–144 (PGAAATSSWFNRYQG). The chain crosses the membrane as a helical span at residues 145-165 (LAMGINFAGGGIGSAIIPPLA). The Extracellular portion of the chain corresponds to 166–175 (GKWVVAYGWR). The chain crosses the membrane as a helical span at residues 176-196 (KAFQLMSIFCAIGVLATALSA). Residues 197–344 (RRREPKRDDS…MFTLPFMGNF (148 aa)) lie on the Cytoplasmic side of the membrane. The interval 198-293 (RREPKRDDSS…EGLDVTEQSQ (96 aa)) is disordered. Basic and acidic residues predominate over residues 244–255 (NEGKEDVREMGR). The chain crosses the membrane as a helical span at residues 345–365 (LCWFIYSWAFYSLIYAAVPYI). At 366–386 (SSMGKPGTVYAGVPPIPTDVA) the chain is on the extracellular side. Residues 387–407 (ATLFTFYGVFQVVGSVLVGWL) form a helical membrane-spanning segment. At 408–412 (ASLVT) the chain is on the cytoplasmic side. The chain crosses the membrane as a helical span at residues 413–433 (AEFAYVFCATVGGIGCGLLAL). Topologically, residues 434 to 437 (GRSY) are extracellular. Residues 438 to 458 (VAFALLLCIIGFCMAGMFAVM) form a helical membrane-spanning segment. The Cytoplasmic portion of the chain corresponds to 459-470 (PTLIATHLYGPN). The chain crosses the membrane as a helical span at residues 471–491 (LGFYFGAVFLAGVVGGFVAPP). The Extracellular segment spans residues 492–505 (MQATIQLRNNGSYA). N-linked (GlcNAc...) asparagine glycosylation occurs at Asn501. The chain crosses the membrane as a helical span at residues 506 to 526 (FVCVVMSVSMTLSALVCYATL). The Cytoplasmic segment spans residues 527-547 (WRSKRSGIVLAARKTKLVEIM).

The protein belongs to the major facilitator superfamily. RibJ family.

It is found in the cell membrane. In terms of biological role, transporter involved in riboflavin (vitamin B2) uptake. Also transports FMN and FAD. In Trypanosoma brucei brucei (strain 927/4 GUTat10.1), this protein is Riboflavin transporter RibJ.